The primary structure comprises 423 residues: MQLLNLGLLLLLPFVAGEIAPQPEPLRAGPSDIVPGQYIVTLKEGLASAQIREHKKWVSSVHQANLDSFAAGASGVETVGIMKNFHIHNLNMYSGGFDDKTAEDLRRSPDVKSVHPDQHVYLAKTVTQPQARWGLGYMSSKGKPVPLHSTLVDYLYDDKAGEGVWAYVLDTGINVDHIEFEGRGILGHNAIPNKPHTDEFGHGTYVAGIIAGKTYGVAKKANVVSAKAFDTGSSTYNYILETYDWIVKNITDSNRKNKAVINLSISGAKYQPFDDAVENAFKAGITTVVAAGNDGKDAKNNTPASSPNAITVGAVRWENTRPSFSNYGKIVDIWAPGELIKSCWKGGNNATSTQSGTSAASPHVAGLVAYLMSLENLPSPSAVTARVLNLTIPNLVKDAKDSPNRVVYNGIQERKFTLPKNTK.

A signal peptide spans 1–17 (MQLLNLGLLLLLPFVAG). The propeptide occupies 18-123 (EIAPQPEPLR…VHPDQHVYLA (106 aa)). The Inhibitor I9 domain maps to 37-123 (QYIVTLKEGL…VHPDQHVYLA (87 aa)). A Peptidase S8 domain is found at 132 to 423 (RWGLGYMSSK…RKFTLPKNTK (292 aa)). Active-site charge relay system residues include aspartate 170 and histidine 202. N-linked (GlcNAc...) asparagine glycosylation is found at asparagine 249, asparagine 262, and asparagine 349. Catalysis depends on serine 358, which acts as the Charge relay system. N-linked (GlcNAc...) asparagine glycosylation is present at asparagine 389.

This sequence belongs to the peptidase S8 family.

The protein localises to the secreted. Secreted subtilisin-like serine protease with keratinolytic activity that contributes to pathogenicity. The polypeptide is Subtilisin-like protease 2 (SUB2) (Arthroderma otae (strain ATCC MYA-4605 / CBS 113480) (Microsporum canis)).